The primary structure comprises 320 residues: Cytochrome f (320 aa).

The N-terminal stretch at 1-35 is a signal peptide; the sequence is MQTRKTFSWIKEQITRSISASLMIYIITRTSISSA. Residues Tyr-36, Cys-56, Cys-59, and His-60 each contribute to the heme site. The chain crosses the membrane as a helical span at residues 286–306; that stretch reads VQGLLFFLASVILAQIFLVLK.

Belongs to the cytochrome f family. The 4 large subunits of the cytochrome b6-f complex are cytochrome b6, subunit IV (17 kDa polypeptide, petD), cytochrome f and the Rieske protein, while the 4 small subunits are PetG, PetL, PetM and PetN. The complex functions as a dimer. Heme is required as a cofactor.

It localises to the plastid. Its subcellular location is the chloroplast thylakoid membrane. Functionally, component of the cytochrome b6-f complex, which mediates electron transfer between photosystem II (PSII) and photosystem I (PSI), cyclic electron flow around PSI, and state transitions. This Panax ginseng (Korean ginseng) protein is Cytochrome f.